Here is a 439-residue protein sequence, read N- to C-terminus: FAD-linked oxidoreductase phmC (439 aa).

The first 19 residues, 1 to 19 (MLSSILLTIFCAFLSSTGA), serve as a signal peptide directing secretion. Asn29 and Asn84 each carry an N-linked (GlcNAc...) asparagine glycan. Positions 89-272 (QGSVPSYYIQ…LSTTTRVEPK (184 aa)) constitute an FAD-binding PCMH-type domain. N-linked (GlcNAc...) asparagine glycosylation is found at Asn285 and Asn300.

Belongs to the oxygen-dependent FAD-linked oxidoreductase family. It depends on FAD as a cofactor.

The protein operates within mycotoxin biosynthesis. FAD-linked oxidoreductase; part of the gene cluster that mediates the biosynthesis of the mycotoxins phomacins, leucine-derived cytochalasans with potent actin polymerization-inhibitory activities and monocot-specific antigerminative activities. The first step in the pathway is catalyzed by the hybrid PKS-NRPS phmA, assisted by the enoyl reductase phmE, that are responsible for fusion of the leucine precursor and the polyketide backbone to produce a 2-pyrrolidone intermediate. The polyketide synthase module (PKS) of phmA is responsible for the synthesis of the polyketide backbone and the downstream nonribosomal peptide synthetase (NRPS) amidates the carboxyl end of the polyketide with the leucine precursor. Because phmA lacks a designated enoylreductase (ER) domain, the required activity is provided the enoyl reductase phmE. Reduction by the hydrolyase phmG, followed by dehydration and intra-molecular Diels-Alder cyclization by the Diels-Alderase phmD then yield the required isoindolone-fused macrocycle. A number of oxidative steps catalyzed by the tailoring cytochrome P450 monooxygenase phmB, the FAD-linked oxidoreductase phmC and the short-chain dehydrogenase/reductase phmF, are further required to afford the final products, phomacin D and phomacin E. The sequence is that of FAD-linked oxidoreductase phmC from Phaeosphaeria nodorum (strain SN15 / ATCC MYA-4574 / FGSC 10173) (Glume blotch fungus).